The sequence spans 117 residues: Large ribosomal subunit protein bL20 (117 aa).

Belongs to the bacterial ribosomal protein bL20 family.

Its function is as follows. Binds directly to 23S ribosomal RNA and is necessary for the in vitro assembly process of the 50S ribosomal subunit. It is not involved in the protein synthesizing functions of that subunit. The chain is Large ribosomal subunit protein bL20 from Geotalea uraniireducens (strain Rf4) (Geobacter uraniireducens).